A 446-amino-acid chain; its full sequence is Nuclear envelope integral membrane protein 1 (446 aa).

Residues 1 to 37 form the signal peptide; sequence MAGFMKYKSVSTTIETVRLKLILTAVLFLFPFSQTSG. N62, N118, and N129 each carry an N-linked (GlcNAc...) asparagine glycan. The next 5 helical transmembrane spans lie at 154-174, 181-201, 209-229, 239-259, and 269-289; these read IYLFLVFLAGVLLFFYADVLS, YSAGMSTGMIASLLILIFIVY, PFYMLVVGGWSFSLYIIQLVF, HWHLAIGYVFVVGFISFAVCY, and SINILSWALQIFGLLLVYAGI. The segment covering 410–431 has biased composition (acidic residues); the sequence is LFSTDEEDKEEEEDGWETEDDI. Positions 410–446 are disordered; sequence LFSTDEEDKEEEEDGWETEDDIKPEVTSPRMNNTRGK. A glycan (N-linked (GlcNAc...) asparagine) is linked at N441.

Belongs to the NEMP family.

It is found in the nucleus inner membrane. Contributes to nuclear envelope stiffness in germ cells. Involved in male and female fertility. Essential for normal erythropoiesis. Required for efficient nuclear envelope opening and enucleation during the late stages of erythroblast maturation. The polypeptide is Nuclear envelope integral membrane protein 1 (Danio rerio (Zebrafish)).